The primary structure comprises 285 residues: Probable endonuclease 4 (285 aa).

Residues His69, His109, Glu145, Asp179, His182, His216, Asp229, His231, and Glu261 each coordinate Zn(2+).

It belongs to the AP endonuclease 2 family. Zn(2+) is required as a cofactor.

It catalyses the reaction Endonucleolytic cleavage to 5'-phosphooligonucleotide end-products.. Endonuclease IV plays a role in DNA repair. It cleaves phosphodiester bonds at apurinic or apyrimidinic (AP) sites, generating a 3'-hydroxyl group and a 5'-terminal sugar phosphate. This Enterobacter sp. (strain 638) protein is Probable endonuclease 4.